The sequence spans 180 residues: MKKNYSYKNIQAIDFTNLNDGEKLLVLEFRNHPNTALWMYSTFISLKTHLQFIEDLKNSPNHRYFLFKEEGVYLGVGSITKINFFHKHGYLGIYKNPFLKNGGETILKALEFIAFEEFQLHSLHLEVMENNFKAIAFYEKNHYELEGRLKGFISKDKEFIDVLLYYKDKKGYNDQSLLKL.

An N-acetyltransferase domain is found at 13-169 (IDFTNLNDGE…IDVLLYYKDK (157 aa)).

It catalyses the reaction UDP-4-amino-4,6-dideoxy-N-acetyl-beta-L-altrosamine + acetyl-CoA = UDP-2,4-diacetamido-2,4,6-trideoxy-beta-L-altrose + CoA + H(+). In terms of biological role, catalyzes the third step in the biosynthesis of pseudaminic acid, a sialic-acid-like sugar that is used to modify flagellin. Mediates N-4 acetylation of UDP-4-amino-4,6-dideoxy-beta-L-AltNAc to form UDP-2,4-diacetamido-2,4,6-trideoxy-beta-L-altropyranose. The chain is UDP-4-amino-4,6-dideoxy-N-acetyl-beta-L-altrosamine N-acetyltransferase (pseH) from Helicobacter pylori (strain ATCC 700392 / 26695) (Campylobacter pylori).